The following is a 533-amino-acid chain: ATP synthase F(1) complex catalytic subunit beta, mitochondrial (533 aa).

Residues 1–53 (MLGLAGRCSAAAASAARPALRRAAGPSHGFLPLLLSRGAGPAAAVGARRDHAA) constitute a mitochondrion transit peptide. Positions 214, 215, 216, 217, 218, and 219 each coordinate ADP. Gly214 provides a ligand contact to ATP. 5 residues coordinate phosphate: Gly214, Val215, Gly216, Lys217, and Thr218. ATP contacts are provided by Gly216, Lys217, Thr218, and Val219. Thr218 contacts Mg(2+). Glu243 contacts Mg(2+). Residue Arg244 participates in ATP binding.

As to quaternary structure, homotrimer. Component of the ATP synthase complex composed at least of ATP5F1A/subunit alpha, ATP5F1B/subunit beta, ATP5MC1/subunit c (homooctomer), MT-ATP6/subunit a, MT-ATP8/subunit 8, ATP5ME/subunit e, ATP5MF/subunit f, ATP5MG/subunit g, ATP5MK/subunit k, ATP5MJ/subunit j, ATP5F1C/subunit gamma, ATP5F1D/subunit delta, ATP5F1E/subunit epsilon, ATP5PF/subunit F6, ATP5PB/subunit b, ATP5PD/subunit d, ATP5PO/subunit OSCP. ATP synthase complex consists of a soluble F(1) head domain (subunits alpha(3) and beta(3)) - the catalytic core - and a membrane F(0) domain - the membrane proton channel (subunits c, a, 8, e, f, g, k and j). These two domains are linked by a central stalk (subunits gamma, delta, and epsilon) rotating inside the F1 region and a stationary peripheral stalk (subunits F6, b, d, and OSCP).

It is found in the mitochondrion inner membrane. It carries out the reaction ATP + H2O + 4 H(+)(in) = ADP + phosphate + 5 H(+)(out). Its function is as follows. Catalytic subunit beta, of the mitochondrial membrane ATP synthase complex (F(1)F(0) ATP synthase or Complex V) that produces ATP from ADP in the presence of a proton gradient across the membrane which is generated by electron transport complexes of the respiratory chain. ATP synthase complex consist of a soluble F(1) head domain - the catalytic core - and a membrane F(1) domain - the membrane proton channel. These two domains are linked by a central stalk rotating inside the F(1) region and a stationary peripheral stalk. During catalysis, ATP synthesis in the catalytic domain of F(1) is coupled via a rotary mechanism of the central stalk subunits to proton translocation. In vivo, can only synthesize ATP although its ATP hydrolase activity can be activated artificially in vitro. With the subunit alpha (ATP5F1A), forms the catalytic core in the F(1) domain. This chain is ATP synthase F(1) complex catalytic subunit beta, mitochondrial, found in Gallus gallus (Chicken).